The following is a 443-amino-acid chain: Aklavinone 7-beta-L-rhodosaminyltransferase (443 aa).

Positions 1-23 are cleaved as a signal peptide; it reads MRVLLTSFALDAHFNGSVPLAWA.

Belongs to the glycosyltransferase 28 family.

It carries out the reaction dTDP-beta-L-rhodosamine + aklavinone = aclacinomycin T + dTDP + 2 H(+). Its activity is regulated as follows. The activity of AknS is substantially increased by the addition of the accessory protein AknT. Its function is as follows. Involved in the biosynthesis of the anthracycline antitumor agent aclacinomycin A. Catalyzes the transfer of the proximal deoxyhexose, L-rhodosamine, from dTDP-beta-L-rhodosamine to the C7-OH of aklavinone aglycone to yield aclacinomycin T (rhodosaminyl-aklavinone). It can also use dTDP-2-deoxy-beta-L-fucose, TDP-2-deoxyfucose, dTDP-4-amino-2-deoxyrhamnose, TDP-L-rhodosamine as sugar donor and epsilon-rhodomycinone as sugar acceptor. The protein is Aklavinone 7-beta-L-rhodosaminyltransferase of Streptomyces galilaeus.